Consider the following 366-residue polypeptide: tRNA/tmRNA (uracil-C(5))-methyltransferase (366 aa).

Residues Gln-190, Tyr-218, Asn-223, Glu-239, and Asp-299 each coordinate S-adenosyl-L-methionine. Cys-324 (nucleophile) is an active-site residue. Residue Glu-358 is the Proton acceptor of the active site.

Belongs to the class I-like SAM-binding methyltransferase superfamily. RNA M5U methyltransferase family. TrmA subfamily.

It carries out the reaction uridine(54) in tRNA + S-adenosyl-L-methionine = 5-methyluridine(54) in tRNA + S-adenosyl-L-homocysteine + H(+). The enzyme catalyses uridine(341) in tmRNA + S-adenosyl-L-methionine = 5-methyluridine(341) in tmRNA + S-adenosyl-L-homocysteine + H(+). In terms of biological role, dual-specificity methyltransferase that catalyzes the formation of 5-methyluridine at position 54 (m5U54) in all tRNAs, and that of position 341 (m5U341) in tmRNA (transfer-mRNA). The sequence is that of tRNA/tmRNA (uracil-C(5))-methyltransferase from Salmonella paratyphi C (strain RKS4594).